A 251-amino-acid chain; its full sequence is Flap endonuclease Xni (251 aa).

Residue Asp104 coordinates Mg(2+). One can recognise a 5'-3' exonuclease domain in the interval 160-249 (VLPRQLPDYW…IDGNLQQLRL (90 aa)). K(+)-binding residues include Leu171, Ala172, Pro180, Val182, and Ile185. The interaction with DNA stretch occupies residues 184–189 (GIGPKS).

This sequence belongs to the Xni family. It depends on Mg(2+) as a cofactor. K(+) is required as a cofactor.

Functionally, has flap endonuclease activity. During DNA replication, flap endonucleases cleave the 5'-overhanging flap structure that is generated by displacement synthesis when DNA polymerase encounters the 5'-end of a downstream Okazaki fragment. The protein is Flap endonuclease Xni of Salmonella typhimurium (strain LT2 / SGSC1412 / ATCC 700720).